A 330-amino-acid polypeptide reads, in one-letter code: Pre-mRNA-splicing factor 38 (330 aa).

Residues 182 to 330 (SVLDEDLDDE…SRGERDRRRY (149 aa)) are disordered. Residues 184–199 (LDEDLDDELPSDEEKA) show a composition bias toward acidic residues. The segment covering 213-224 (RRPRRVRSKSRS) has biased composition (basic residues). Over residues 240–330 (RSRDYYDELE…SRGERDRRRY (91 aa)) the composition is skewed to basic and acidic residues.

The protein belongs to the PRP38 family. As to quaternary structure, component of the spliceosome C complex. Interacts with Mfap1 (via C-terminus). In terms of tissue distribution, detected in all germal and follicle cells.

It localises to the nucleus. In terms of biological role, required for pre-mRNA splicing. This is Pre-mRNA-splicing factor 38 from Drosophila melanogaster (Fruit fly).